Reading from the N-terminus, the 571-residue chain is Folylpolyglutamate synthase (571 aa).

122 to 125 (GKGS) is a binding site for ATP. Ser-146, Glu-215, and His-243 together coordinate Mg(2+). ATP contacts are provided by Arg-363 and Asp-385.

This sequence belongs to the folylpolyglutamate synthase family. It depends on a monovalent cation as a cofactor. In terms of tissue distribution, expressed in both shoots and roots, but expression in roots is higher compared with shoots. Distinct expression in the quiescent center (QC) region of the root tip. Also expressed in vascular tissues of the cotyledons and hypocotyls, and the first true leaves of 7 days old seedlings.

The protein localises to the plastid. It is found in the chloroplast. The catalysed reaction is (6S)-5,6,7,8-tetrahydrofolyl-(gamma-L-Glu)(n) + L-glutamate + ATP = (6S)-5,6,7,8-tetrahydrofolyl-(gamma-L-Glu)(n+1) + ADP + phosphate + H(+). It functions in the pathway cofactor biosynthesis; tetrahydrofolylpolyglutamate biosynthesis. Its function is as follows. Catalyzes conversion of folates to polyglutamate derivatives allowing concentration of folate compounds in the cell and the intracellular retention of these cofactors, which are important substrates for most of the folate-dependent enzymes that are involved in one-carbon transfer reactions involved in purine, pyrimidine and amino acid synthesis. Essential for organellar and whole-plant folate homeostasis. Required for postembryonic root development. Generates polyglutamylated folate cofactors to support C1 metabolism required for meristem maintenance and cell expansion during postembryonic root development. The chain is Folylpolyglutamate synthase from Arabidopsis thaliana (Mouse-ear cress).